The following is a 384-amino-acid chain: Dual specificity protein phosphatase 5 (384 aa).

Residues A19–V141 form the Rhodanese domain. The Nuclear localization signal signature appears at R53–R74. One can recognise a Tyrosine-protein phosphatase domain in the interval G178 to P319. C263 (phosphocysteine intermediate) is an active-site residue.

It belongs to the protein-tyrosine phosphatase family. Non-receptor class dual specificity subfamily.

It is found in the nucleus. The catalysed reaction is O-phospho-L-tyrosyl-[protein] + H2O = L-tyrosyl-[protein] + phosphate. It carries out the reaction O-phospho-L-seryl-[protein] + H2O = L-seryl-[protein] + phosphate. It catalyses the reaction O-phospho-L-threonyl-[protein] + H2O = L-threonyl-[protein] + phosphate. Its function is as follows. Dual specificity protein phosphatase; active with phosphotyrosine, phosphoserine and phosphothreonine residues. The highest relative activity is toward ERK1. The protein is Dual specificity protein phosphatase 5 (DUSP5) of Homo sapiens (Human).